A 64-amino-acid chain; its full sequence is Large ribosomal subunit protein bL35 (64 aa).

A disordered region spans residues 1-21; sequence MPKMKTNRGAAKRFKVKKSGK. Basic residues predominate over residues 10 to 21; it reads AAKRFKVKKSGK.

Belongs to the bacterial ribosomal protein bL35 family.

This chain is Large ribosomal subunit protein bL35, found in Nautilia profundicola (strain ATCC BAA-1463 / DSM 18972 / AmH).